Here is a 243-residue protein sequence, read N- to C-terminus: Terpene cyclase dpmpB (243 aa).

Transmembrane regions (helical) follow at residues 13–33 (FLEV…GWTA), 51–71 (ALMP…ILPF), 78–98 (WVHV…IKFA), 112–132 (LTWI…ALAA), 141–161 (AWSA…QLLC), 169–189 (SYLL…QDIL), and 207–227 (LWFV…LWYV).

It belongs to the paxB family.

The protein resides in the membrane. It participates in secondary metabolite biosynthesis; terpenoid biosynthesis. Terpene cyclase; part of the gene cluster that mediates the biosynthesis of diterpenoid pyrones. The first step of the pathway is the synthesis of the alpha-pyrone moiety by the polyketide synthase dpmpA via condensation of one acetyl-CoA starter unit with 3 malonyl-CoA units and 2 methylations. The alpha-pyrone is then combined with geranylgeranyl pyrophosphate (GGPP) formed by the GGPP synthase dpmpD through the action of the prenyltransferase dpmpC to yield a linear alpha-pyrone diterpenoid. Subsequent steps in the diterpenoid pyrone biosynthetic pathway involve the decalin core formation, which is initiated by the epoxidation of the C10-C11 olefin by the FAD-dependent oxidoreductase dpmpE, and is followed by a cyclization cascade catalyzed by the terpene cyclase dpmpB. The short chain dehydrogenase/reductase dpmpG then oxidizes the 8S hydroxy group to a ketone and the short chain dehydrogenase/reductase dpmpH reduces the ketone to the 8R hydroxy group to yield higginsianin B. Higginsianin B is further methylated by the methyltransferase dpmpI to produce the intermediate named FDDP B. The cytochrome P450 monooxygenase dpmpJ then oxidizes the C-26 methyl to primary alcohol, producing the final diterpenoid pyrone with a C-26 primary alcohol on the gamma-pyrone moiety named FDDP C. The protein is Terpene cyclase dpmpB of Macrophomina phaseolina (strain MS6) (Charcoal rot fungus).